Consider the following 83-residue polypeptide: MGRTKKVRSAGRFGPRYGLRVRRTWLEIEAVQRQKYVCKKCGKKAVKRSGTGIWECRHCGYKFAGGCYQPVTPGGKIVEKSVG.

Positions 38, 41, 56, and 59 each coordinate Zn(2+). The C4-type zinc-finger motif lies at 38-59; the sequence is CKKCGKKAVKRSGTGIWECRHC.

Belongs to the eukaryotic ribosomal protein eL43 family. Putative zinc-binding subfamily. In terms of assembly, part of the 50S ribosomal subunit. The cofactor is Zn(2+).

In terms of biological role, binds to the 23S rRNA. The chain is Large ribosomal subunit protein eL43 from Archaeoglobus fulgidus (strain ATCC 49558 / DSM 4304 / JCM 9628 / NBRC 100126 / VC-16).